Consider the following 616-residue polypeptide: Sodium- and chloride-dependent transporter XTRP3 (616 aa).

Residues 1–11 (MRLAIKRRASR) show a composition bias toward basic residues. The interval 1–26 (MRLAIKRRASRGQRPGPDEKRARDME) is disordered. Topologically, residues 1 to 37 (MRLAIKRRASRGQRPGPDEKRARDMEKARPQWGNPLQ) are cytoplasmic. Residues 16-26 (GPDEKRARDME) are compositionally biased toward basic and acidic residues. The chain crosses the membrane as a helical span at residues 38-58 (FVFACISYAVGLGNVWRFPYL). The Extracellular segment spans residues 59–66 (CQMYGGGS). Residues 67–87 (FLVPYLIMLIVEGMPLLYLEL) traverse the membrane as a helical segment. The Cytoplasmic segment spans residues 88–103 (AVGQRMRQGSIGAWRT). A helical membrane pass occupies residues 104–124 (ISPYLSGVGVASVVVSFFLSM). At 125–189 (YYNVINAWGF…ISPSIQENGG (65 aa)) the chain is on the extracellular side. An N-linked (GlcNAc...) asparagine glycan is attached at Asn155. A helical membrane pass occupies residues 190–210 (VQWEPALCLTLAWLMVYLCIL). Over 211–218 (RGTESTGK) the chain is Cytoplasmic. Residues 219-239 (VVYFTALMPYCVLIIYLVRGL) traverse the membrane as a helical segment. Over 240 to 265 (TLHGATNGLMYMFTPKIEQLANPKAW) the chain is Extracellular. A helical transmembrane segment spans residues 266–286 (INAATQIFFSLGLGFGSLIAF). Topologically, residues 287–300 (ASYNEPSNDCQKHA) are cytoplasmic. The helical transmembrane segment at 301–321 (VIVSVINSSTSIFASIVTFSI) threads the bilayer. Residues 322-413 (YGFKATFNYE…EAIKNMEVSQ (92 aa)) lie on the Extracellular side of the membrane. An N-linked (GlcNAc...) asparagine glycan is attached at Asn381. A helical transmembrane segment spans residues 414–434 (LWSVLYFFMLLMLGMGSMLGN). At 435 to 455 (TAAILTPLTDSKVISSYLPKE) the chain is on the cytoplasmic side. A helical transmembrane segment spans residues 456 to 476 (AISGLVCLINCAVGMVFTMEA). Residues 477 to 489 (GNYWFDIFNDYAA) lie on the Extracellular side of the membrane. A helical transmembrane segment spans residues 490 to 510 (TLSLLLIVLVETIAVCYVYGL). The Cytoplasmic portion of the chain corresponds to 511–533 (RRFESDLRAMTGRPLNWYWKAMW). Residues 534-554 (AFVSPLLIIGLFIFYLSDYIL) traverse the membrane as a helical segment. Topologically, residues 555–578 (TGTLQYQAWDATQGQLVTKDYPPH) are extracellular. A helical membrane pass occupies residues 579–599 (ALAVIGLLVASSTMCIPLVAL). Residues 600 to 616 (GTFIRNRLKRGGSSPVA) are Cytoplasmic-facing.

It belongs to the sodium:neurotransmitter symporter (SNF) (TC 2.A.22) family. SLC6A20 subfamily. Highly expressed in epithelial cells of duodenum, jejunum, ileum, stomach, cecum, colon and kidney proximal tubule. Also expressed in the choroid plexus, microglia and meniges of the brain and in the ovary.

It localises to the apical cell membrane. It carries out the reaction L-proline(out) + chloride(out) + 2 Na(+)(out) = L-proline(in) + chloride(in) + 2 Na(+)(in). The catalysed reaction is 4-hydroxy-L-proline(out) + chloride(out) + 2 Na(+)(out) = 4-hydroxy-L-proline(in) + chloride(in) + 2 Na(+)(in). The enzyme catalyses 2-methyl-2-(methylamino)propanoate(out) + chloride(out) + 2 Na(+)(out) = 2-methyl-2-(methylamino)propanoate(in) + chloride(in) + 2 Na(+)(in). It catalyses the reaction L-pipecolate(out) + chloride(out) + 2 Na(+)(out) = L-pipecolate(in) + chloride(in) + 2 Na(+)(in). It carries out the reaction glycine betaine(out) + chloride(out) + 2 Na(+)(out) = glycine betaine(in) + chloride(in) + 2 Na(+)(in). The catalysed reaction is glycine(out) + chloride(out) + 2 Na(+)(out) = glycine(in) + chloride(in) + 2 Na(+)(in). Mediates the Na(+)- and Cl(-)-dependent uptake of imino acids such as L-proline, N-methyl-L-proline and pipecolate as well as N-methylated amino acids. Also transports glycine, regulates proline and glycine homeostasis in the brain playing a role in the modulation of NMDAR currents. The protein is Sodium- and chloride-dependent transporter XTRP3 of Rattus norvegicus (Rat).